The primary structure comprises 75 residues: RNA-binding protein KhpA (75 aa).

Residues 29 to 75 (KKVYEIVVNEEDVGQVIGKDGRTIKSLKILLSALMGDSKEITIKVVR) form the KH domain.

This sequence belongs to the KhpA RNA-binding protein family. Forms a complex with KhpB.

The protein resides in the cytoplasm. Functionally, a probable RNA chaperone. Forms a complex with KhpB which binds to cellular RNA and controls its expression. Plays a role in peptidoglycan (PG) homeostasis and cell length regulation. This is RNA-binding protein KhpA from Thermotoga maritima (strain ATCC 43589 / DSM 3109 / JCM 10099 / NBRC 100826 / MSB8).